Consider the following 184-residue polypeptide: Ribosome-recycling factor (184 aa).

This sequence belongs to the RRF family.

Its subcellular location is the cytoplasm. In terms of biological role, responsible for the release of ribosomes from messenger RNA at the termination of protein biosynthesis. May increase the efficiency of translation by recycling ribosomes from one round of translation to another. The sequence is that of Ribosome-recycling factor from Acinetobacter baylyi (strain ATCC 33305 / BD413 / ADP1).